Consider the following 100-residue polypeptide: Urease subunit gamma (100 aa).

The protein belongs to the urease gamma subunit family. Heterotrimer of UreA (gamma), UreB (beta) and UreC (alpha) subunits. Three heterotrimers associate to form the active enzyme.

It localises to the cytoplasm. It catalyses the reaction urea + 2 H2O + H(+) = hydrogencarbonate + 2 NH4(+). It participates in nitrogen metabolism; urea degradation; CO(2) and NH(3) from urea (urease route): step 1/1. This chain is Urease subunit gamma, found in Pseudarthrobacter chlorophenolicus (strain ATCC 700700 / DSM 12829 / CIP 107037 / JCM 12360 / KCTC 9906 / NCIMB 13794 / A6) (Arthrobacter chlorophenolicus).